Here is a 105-residue protein sequence, read N- to C-terminus: Oxytocin-neurophysin 1 (105 aa).

An intrachain disulfide couples Cys1 to Cys6. At Gly9 the chain carries Glycine amide. 7 disulfides stabilise this stretch: Cys22/Cys66, Cys25/Cys39, Cys33/Cys56, Cys40/Cys46, Cys73/Cys85, Cys79/Cys97, and Cys86/Cys91.

Belongs to the vasopressin/oxytocin family. As to quaternary structure, interacts with oxytocin receptor (Ki=1.5 nM). Interacts with vasopressin V1aR/AVPR1A (Ki=37 nM), V1bR/AVPR1B (Ki=222 nM), and V2R/AVPR2 receptors (Ki=823 nM).

The protein resides in the secreted. Neurophysin 1 specifically binds oxytocin. Functionally, oxytocin causes contraction of the smooth muscle of the uterus and of the mammary gland. Acts by binding to oxytocin receptor (OXTR). The protein is Oxytocin-neurophysin 1 (OXT) of Equus caballus (Horse).